Here is a 429-residue protein sequence, read N- to C-terminus: MNQPSDLSHTSMSRVEAMHSWSAPNVPALPGRGPQLRLYDSADRQVRPVAPGATATMYVCGITPYDATHLGHAATYLTFDLVHRLWRDSGHDVHYVQNITDVDDPLFERAQRDGIGWRELGDRETELFREDMAALRVLPPRDYVAATEAIAEVVELVEKMLAAGAAYVVDDPQYPDVYFRADATVQFGYESGYDRDTMLALFAERGGDPDRPGKSDPLDALLWLAERPGEPSWPSPFGPGRPGWHVECAAIALSRIGTGLDIQGGGSDLIFPHHEFSAAHAECVTGERRFARHYVHAGMIGWDGHKMSKSRGNLVLVSQLRRDGVDPAAIRLGLFAGHYRDDRFWSPAVLDEALARLHRWRSATALAGAPDATDVVARVRRYLADDLDTPKALAALDGWATDALTYGGHDATAGTTVATAVDALLGIAL.

Residue C60 participates in Zn(2+) binding. Residues 60-63 (CGIT), T75, and 98-100 (NIT) each bind L-cysteinyl-5'-AMP. The 'HIGH' region motif lies at 62-72 (ITPYDATHLGH). The 'ERGGDP' region signature appears at 204 to 209 (ERGGDP). Residue W244 coordinates L-cysteinyl-5'-AMP. Residue C248 coordinates Zn(2+). 266–268 (GSD) contacts L-cysteinyl-5'-AMP. H273 is a Zn(2+) binding site. Residue I300 participates in L-cysteinyl-5'-AMP binding. Positions 306–310 (KMSKS) match the 'KMSKS' region motif.

Belongs to the class-I aminoacyl-tRNA synthetase family. MshC subfamily. As to quaternary structure, monomer. The cofactor is Zn(2+).

It carries out the reaction 1D-myo-inositol 2-amino-2-deoxy-alpha-D-glucopyranoside + L-cysteine + ATP = 1D-myo-inositol 2-(L-cysteinylamino)-2-deoxy-alpha-D-glucopyranoside + AMP + diphosphate + H(+). In terms of biological role, catalyzes the ATP-dependent condensation of GlcN-Ins and L-cysteine to form L-Cys-GlcN-Ins. The sequence is that of L-cysteine:1D-myo-inositol 2-amino-2-deoxy-alpha-D-glucopyranoside ligase from Mycolicibacterium vanbaalenii (strain DSM 7251 / JCM 13017 / BCRC 16820 / KCTC 9966 / NRRL B-24157 / PYR-1) (Mycobacterium vanbaalenii).